A 102-amino-acid polypeptide reads, in one-letter code: Small ribosomal subunit protein uS10 (102 aa).

Belongs to the universal ribosomal protein uS10 family. As to quaternary structure, part of the 30S ribosomal subunit.

In terms of biological role, involved in the binding of tRNA to the ribosomes. In Chlorobium phaeobacteroides (strain BS1), this protein is Small ribosomal subunit protein uS10.